Consider the following 649-residue polypeptide: Acetyl-coenzyme A synthetase (649 aa).

Residues 190–193 and Thr310 contribute to the CoA site; that span reads RGGR. ATP contacts are provided by residues 386-388, 410-415, Asp499, and Arg514; these read GEP and DTWWQT. Ser522 contacts CoA. Position 525 (Arg525) interacts with ATP. Residues Val536, His538, and Val541 each contribute to the Mg(2+) site. CoA is bound at residue Arg583. Lys608 is modified (N6-acetyllysine).

The protein belongs to the ATP-dependent AMP-binding enzyme family. It depends on Mg(2+) as a cofactor. Post-translationally, acetylated. Deacetylation by the SIR2-homolog deacetylase activates the enzyme.

It carries out the reaction acetate + ATP + CoA = acetyl-CoA + AMP + diphosphate. In terms of biological role, catalyzes the conversion of acetate into acetyl-CoA (AcCoA), an essential intermediate at the junction of anabolic and catabolic pathways. AcsA undergoes a two-step reaction. In the first half reaction, AcsA combines acetate with ATP to form acetyl-adenylate (AcAMP) intermediate. In the second half reaction, it can then transfer the acetyl group from AcAMP to the sulfhydryl group of CoA, forming the product AcCoA. The sequence is that of Acetyl-coenzyme A synthetase from Methylorubrum populi (strain ATCC BAA-705 / NCIMB 13946 / BJ001) (Methylobacterium populi).